The sequence spans 290 residues: Hydroxyacylglutathione hydrolase-like protein (290 aa).

The Zn(2+) site is built by H54, H56, D58, H59, H110, D134, and H172.

It belongs to the metallo-beta-lactamase superfamily. Glyoxalase II family. Requires Zn(2+) as cofactor.

Hydrolase acting on ester bonds. In Homo sapiens (Human), this protein is Hydroxyacylglutathione hydrolase-like protein (HAGHL).